The primary structure comprises 603 residues: Prostaglandin G/H synthase 1 (603 aa).

An N-terminal signal peptide occupies residues 1–27 (MSRGSRLHRWPLLLLLLLLLPPPPVLP). The 39-residue stretch at 35–73 (PVNPCCYYPCQHQGICVRFGLDRYQCDCTRTGYSGPNCT) folds into the EGF-like domain. Intrachain disulfides connect Cys-39-Cys-50, Cys-40-Cys-162, Cys-44-Cys-60, and Cys-62-Cys-72. Residues Asn-71, Asn-107, and Asn-147 are each glycosylated (N-linked (GlcNAc...) asparagine). His-210 functions as the Proton acceptor in the catalytic mechanism. Tyr-388 acts as the For cyclooxygenase activity in catalysis. His-391 is a heme b binding site. An intrachain disulfide couples Cys-572 to Cys-578.

This sequence belongs to the prostaglandin G/H synthase family. In terms of assembly, homodimer. Heme b serves as cofactor. Post-translationally, N-glycosylated. N-linked glycosylation is necessary for enzymatic activity. In terms of tissue distribution, brain cortex. Isoform 2 is expressed in the cerebral cortex and heart.

It localises to the microsome membrane. Its subcellular location is the endoplasmic reticulum membrane. The enzyme catalyses (5Z,8Z,11Z,14Z)-eicosatetraenoate + AH2 + 2 O2 = prostaglandin H2 + A + H2O. It catalyses the reaction (5Z,8Z,11Z,14Z)-eicosatetraenoate + 2 O2 = prostaglandin G2. It carries out the reaction prostaglandin G2 + AH2 = prostaglandin H2 + A + H2O. The catalysed reaction is (9Z,12Z)-octadecadienoate + AH2 + O2 = (9R)-hydroxy-(10E,12Z)-octadecadienoate + A + H2O. The enzyme catalyses (9Z,12Z)-octadecadienoate + AH2 + O2 = (9S)-hydroxy-(10E,12Z)-octadecadienoate + A + H2O. It catalyses the reaction (9Z,12Z)-octadecadienoate + AH2 + O2 = (13S)-hydroxy-(9Z,11E)-octadecadienoate + A + H2O. It carries out the reaction (9Z,12Z)-octadecadienoate + AH2 + O2 = (13R)-hydroxy-(9Z,11E)-octadecadienoate + A + H2O. The protein operates within lipid metabolism; prostaglandin biosynthesis. The cyclooxygenase activity is inhibited by nonsteroidal anti-inflammatory drugs (NSAIDs) including ibuprofen, flurbiprofen, ketoprofen, naproxen, flurbiprofen, anirolac, fenclofenac and diclofenac. Dual cyclooxygenase and peroxidase that plays an important role in the biosynthesis pathway of prostanoids, a class of C20 oxylipins mainly derived from arachidonate ((5Z,8Z,11Z,14Z)-eicosatetraenoate, AA, C20:4(n-6)), with a particular role in the inflammatory response. The cyclooxygenase activity oxygenates AA to the hydroperoxy endoperoxide prostaglandin G2 (PGG2), and the peroxidase activity reduces PGG2 to the hydroxy endoperoxide prostaglandin H2 (PGH2), the precursor of all 2-series prostaglandins and thromboxanes. This complex transformation is initiated by abstraction of hydrogen at carbon 13 (with S-stereochemistry), followed by insertion of molecular O2 to form the endoperoxide bridge between carbon 9 and 11 that defines prostaglandins. The insertion of a second molecule of O2 (bis-oxygenase activity) yields a hydroperoxy group in PGG2 that is then reduced to PGH2 by two electrons. Involved in the constitutive production of prostanoids in particular in the stomach and platelets. In gastric epithelial cells, it is a key step in the generation of prostaglandins, such as prostaglandin E2 (PGE2), which plays an important role in cytoprotection. In platelets, it is involved in the generation of thromboxane A2 (TXA2), which promotes platelet activation and aggregation, vasoconstriction and proliferation of vascular smooth muscle cells. Can also use linoleate (LA, (9Z,12Z)-octadecadienoate, C18:2(n-6)) as substrate and produce hydroxyoctadecadienoates (HODEs) in a regio- and stereospecific manner, being (9R)-HODE ((9R)-hydroxy-(10E,12Z)-octadecadienoate) and (13S)-HODE ((13S)-hydroxy-(9Z,11E)-octadecadienoate) its major products. In Canis lupus familiaris (Dog), this protein is Prostaglandin G/H synthase 1 (PTGS1).